We begin with the raw amino-acid sequence, 358 residues long: Probable isocitrate dehydrogenase [NAD] subunit alpha, mitochondrial (358 aa).

Substrate-binding residues include Arg108, Arg118, Arg139, and Asp226. Mg(2+) is bound by residues Asp226, Asp250, and Asp254.

Belongs to the isocitrate and isopropylmalate dehydrogenases family. Heterooligomer of subunits alpha, beta, and gamma in the apparent ratio of 2:1:1. Mg(2+) is required as a cofactor. Mn(2+) serves as cofactor.

It is found in the mitochondrion. The enzyme catalyses D-threo-isocitrate + NAD(+) = 2-oxoglutarate + CO2 + NADH. This chain is Probable isocitrate dehydrogenase [NAD] subunit alpha, mitochondrial (idha-1), found in Caenorhabditis elegans.